The chain runs to 407 residues: [Pyruvate dehydrogenase (acetyl-transferring)] kinase isozyme 2, mitochondrial (407 aa).

Residues 135 to 364 form the Histidine kinase domain; it reads LEYKDTYGDD…DAVIYLKALS (230 aa). Residues Tyr215 and Tyr216 each carry the phosphotyrosine modification. ATP-binding positions include 251–258, Asp290, 309–310, and 325–330; these read ELFKNAMR, ST, and GFGYGL. N6-succinyllysine is present on Lys376.

The protein belongs to the PDK/BCKDK protein kinase family. As to quaternary structure, homodimer, and heterodimer with PDK1. Interacts with the pyruvate dehydrogenase complex subunit DLAT, and is part of the multimeric pyruvate dehydrogenase complex that contains multiple copies of pyruvate dehydrogenase (E1), dihydrolipoamide acetyltransferase (DLAT, E2) and lipoamide dehydrogenase (DLD, E3). In terms of tissue distribution, detected in heart (at protein level).

The protein localises to the mitochondrion matrix. The enzyme catalyses L-seryl-[pyruvate dehydrogenase E1 alpha subunit] + ATP = O-phospho-L-seryl-[pyruvate dehydrogenase E1 alpha subunit] + ADP + H(+). Functionally, kinase that plays a key role in the regulation of glucose and fatty acid metabolism and homeostasis via phosphorylation of the pyruvate dehydrogenase subunits PDHA1 and PDHA2. This inhibits pyruvate dehydrogenase activity, and thereby regulates metabolite flux through the tricarboxylic acid cycle, down-regulates aerobic respiration and inhibits the formation of acetyl-coenzyme A from pyruvate. Inhibition of pyruvate dehydrogenase decreases glucose utilization and increases fat metabolism. Mediates cellular responses to insulin. Plays an important role in maintaining normal blood glucose levels and in metabolic adaptation to nutrient availability. Via its regulation of pyruvate dehydrogenase activity, plays an important role in maintaining normal blood pH and in preventing the accumulation of ketone bodies under starvation. Plays a role in the regulation of cell proliferation and in resistance to apoptosis under oxidative stress. Plays a role in p53/TP53-mediated apoptosis. The chain is [Pyruvate dehydrogenase (acetyl-transferring)] kinase isozyme 2, mitochondrial (Pdk2) from Mus musculus (Mouse).